The chain runs to 396 residues: Argininosuccinate synthase (396 aa).

Residues 10–18 and A37 contribute to the ATP site; that span reads AYSGGLDTS. Residues Y88 and S93 each coordinate L-citrulline. An ATP-binding site is contributed by G118. T120, N124, and D125 together coordinate L-aspartate. N124 provides a ligand contact to L-citrulline. L-citrulline-binding residues include R128, S176, S185, E261, and Y273.

It belongs to the argininosuccinate synthase family. Type 1 subfamily. As to quaternary structure, homotetramer.

Its subcellular location is the cytoplasm. The enzyme catalyses L-citrulline + L-aspartate + ATP = 2-(N(omega)-L-arginino)succinate + AMP + diphosphate + H(+). Its pathway is amino-acid biosynthesis; L-arginine biosynthesis; L-arginine from L-ornithine and carbamoyl phosphate: step 2/3. The protein is Argininosuccinate synthase of Nitratidesulfovibrio vulgaris (strain DP4) (Desulfovibrio vulgaris).